The following is a 341-amino-acid chain: Follistatin (341 aa).

A signal peptide spans 1–29; sequence MLNERIQPGMIFLLTVSLCHFMEYRAVQA. The region spanning 30 to 103 is the TB domain; it reads GNCWLQQSKN…TCENVDCGPG (74 aa). Intrachain disulfides connect cysteine 32–cysteine 55, cysteine 42–cysteine 88, cysteine 56–cysteine 91, cysteine 95–cysteine 106, cysteine 100–cysteine 116, cysteine 118–cysteine 150, cysteine 122–cysteine 143, and cysteine 132–cysteine 164. Asparagine 72 carries N-linked (GlcNAc...) asparagine glycosylation. Residues 94–117 enclose the Follistatin-like 1 domain; it reads TCENVDCGPGKKCKMNKKNKPRCV. Kazal-like domains follow at residues 100–166, 186–241, and 264–318; these read CGPG…KCKK, NAYC…KCIK, and RGRC…SCNS. A glycan (N-linked (GlcNAc...) asparagine) is linked at asparagine 124. Positions 167–190 constitute a Follistatin-like 2 domain; it reads TCRDVLCPGSSSCVVDQTNNAYCV. 3 disulfide bridges follow: cysteine 192/cysteine 225, cysteine 196/cysteine 218, and cysteine 207/cysteine 239. One can recognise a Follistatin-like 3 domain in the interval 244-268; the sequence is SCEDIQCSAGKKCLWDSRVGRGRCA. Cystine bridges form between cysteine 270/cysteine 302, cysteine 274/cysteine 295, and cysteine 284/cysteine 316. Residue asparagine 288 is glycosylated (N-linked (GlcNAc...) asparagine). A compositionally biased stretch (acidic residues) spans 321 to 333; it reads EDTEEEEEEEEPD. A disordered region spans residues 321-341; sequence EDTEEEEEEEEPDYSFVISSW.

In terms of assembly, monomer. In terms of tissue distribution, spemann organizer and notochord.

The protein resides in the secreted. In terms of biological role, binds directly to activin and functions as an activin antagonist which plays a role in neural induction. The short isoform is a more potent inhibitor of activin than the long isoform. Specific inhibitor of the biosynthesis and secretion of pituitary follicle stimulating hormone (FSH). In Xenopus laevis (African clawed frog), this protein is Follistatin (fst).